A 236-amino-acid chain; its full sequence is Phosphoribosylaminoimidazole-succinocarboxamide synthase (236 aa).

Belongs to the SAICAR synthetase family.

The catalysed reaction is 5-amino-1-(5-phospho-D-ribosyl)imidazole-4-carboxylate + L-aspartate + ATP = (2S)-2-[5-amino-1-(5-phospho-beta-D-ribosyl)imidazole-4-carboxamido]succinate + ADP + phosphate + 2 H(+). It participates in purine metabolism; IMP biosynthesis via de novo pathway; 5-amino-1-(5-phospho-D-ribosyl)imidazole-4-carboxamide from 5-amino-1-(5-phospho-D-ribosyl)imidazole-4-carboxylate: step 1/2. This Chlorobium limicola (strain DSM 245 / NBRC 103803 / 6330) protein is Phosphoribosylaminoimidazole-succinocarboxamide synthase.